A 499-amino-acid polypeptide reads, in one-letter code: tRNA-specific adenosine deaminase 1 (499 aa).

The region spanning 63 to 498 is the A to I editase domain; it reads SMGTGTKCIG…IRNPPDYHQF (436 aa). A Zn(2+)-binding site is contributed by His87. The active-site Proton donor is Glu89. 2 residues coordinate 1D-myo-inositol hexakisphosphate: Arg93 and Arg94. Residue Cys142 coordinates Zn(2+). Disordered regions lie at residues 170–194 and 212–237; these read PVQE…SPVA and HHGT…EPDA. Basic and acidic residues predominate over residues 178–187; it reads EDSKDKRNCE. Ser191 is subject to Phosphoserine. Residue Cys294 participates in Zn(2+) binding. 4 residues coordinate 1D-myo-inositol hexakisphosphate: Lys297, Arg300, Lys430, and Lys466.

It belongs to the ADAT1 family. 1D-myo-inositol hexakisphosphate serves as cofactor.

It catalyses the reaction adenosine(37) in tRNA(Ala) + H2O + H(+) = inosine(37) in tRNA(Ala) + NH4(+). Its function is as follows. Specifically deaminates adenosine-37 to inosine in tRNA-Ala. In Mus musculus (Mouse), this protein is tRNA-specific adenosine deaminase 1 (Adat1).